We begin with the raw amino-acid sequence, 256 residues long: Small ribosomal subunit protein eS1 (256 aa).

Residue Ala2 is modified to N-acetylalanine; partial.

Belongs to the eukaryotic ribosomal protein eS1 family. Component of the small ribosomal subunit. Mature ribosomes consist of a small (40S) and a large (60S) subunit. The 40S subunit contains about 33 different proteins and 1 molecule of RNA (18S). The 60S subunit contains about 49 different proteins and 3 molecules of RNA (25S, 5.8S and 5S).

It is found in the cytoplasm. This Meyerozyma guilliermondii (strain ATCC 6260 / CBS 566 / DSM 6381 / JCM 1539 / NBRC 10279 / NRRL Y-324) (Yeast) protein is Small ribosomal subunit protein eS1.